The chain runs to 295 residues: Glutamyl-Q tRNA(Asp) synthetase (295 aa).

L-glutamate contacts are provided by residues 9-13 (RFAPT) and glutamate 45. The 'HIGH' region motif lies at 12-22 (PTPSGYLHFGS). Residues cysteine 101, cysteine 103, tyrosine 115, and cysteine 119 each coordinate Zn(2+). Positions 172 and 190 each coordinate L-glutamate. Residues 228–232 (KLGKS) carry the 'KMSKS' region motif. Lysine 231 contributes to the ATP binding site.

This sequence belongs to the class-I aminoacyl-tRNA synthetase family. GluQ subfamily. The cofactor is Zn(2+).

Its function is as follows. Catalyzes the tRNA-independent activation of glutamate in presence of ATP and the subsequent transfer of glutamate onto a tRNA(Asp). Glutamate is transferred on the 2-amino-5-(4,5-dihydroxy-2-cyclopenten-1-yl) moiety of the queuosine in the wobble position of the QUC anticodon. This Pseudomonas syringae pv. syringae (strain B728a) protein is Glutamyl-Q tRNA(Asp) synthetase.